Here is a 298-residue protein sequence, read N- to C-terminus: Nucleotide-binding protein GK3066 (298 aa).

G17–T24 contacts ATP. Residue D68–S71 participates in GTP binding.

Belongs to the RapZ-like family.

Its function is as follows. Displays ATPase and GTPase activities. In Geobacillus kaustophilus (strain HTA426), this protein is Nucleotide-binding protein GK3066.